A 306-amino-acid chain; its full sequence is 2-dehydro-3-deoxy-D-gluconate/2-dehydro-3-deoxy-phosphogluconate aldolase (306 aa).

Substrate-binding positions include 61–62, 148–150, and 173–175; these read TT, YNY, and KDT. The active-site Schiff-base intermediate with substrate is Lys173.

Belongs to the DapA family. KDPG aldolase subfamily. Homotetramer; dimer of dimers.

The catalysed reaction is 2-dehydro-3-deoxy-6-phospho-D-gluconate = D-glyceraldehyde 3-phosphate + pyruvate. It catalyses the reaction 2-dehydro-3-deoxy-D-gluconate = D-glyceraldehyde + pyruvate. It functions in the pathway carbohydrate acid metabolism; 2-dehydro-3-deoxy-D-gluconate degradation; D-glyceraldehyde 3-phosphate and pyruvate from 2-dehydro-3-deoxy-D-gluconate: step 2/2. Functionally, involved in the degradation of glucose via the Entner-Doudoroff pathway. Catalyzes the reversible cleavage of 2-keto-3-deoxy-6-phosphogluconate (KDPG) and 2-keto-3-deoxygluconate (KDG) forming pyruvate and glyceraldehyde 3-phosphate or glyceraldehyde, respectively. It is not able to use 2-keto-3-deoxy-6-phosphogalactonate (KDPGal) and 2-keto-3-deoxygalactonate (KDGal) as substrate. The chain is 2-dehydro-3-deoxy-D-gluconate/2-dehydro-3-deoxy-phosphogluconate aldolase (kdgA) from Thermoproteus tenax.